A 365-amino-acid chain; its full sequence is 5-hydroxytryptamine receptor 1F (365 aa).

The Extracellular segment spans residues 1–24; the sequence is MDFLNSSDQNLTSEELLNRMPSKI. N-linked (GlcNAc...) asparagine glycans are attached at residues N5 and N10. The chain crosses the membrane as a helical span at residues 25–49; sequence LVSLTLSGLALMTTTINSLVIAAII. At 50–59 the chain is on the cytoplasmic side; sequence VTRKLHHPAN. A helical membrane pass occupies residues 60–81; the sequence is YLICSLAVTDFLVAVLVMPFSI. Topologically, residues 82 to 96 are extracellular; that stretch reads VYIVRESWIMGQVVC. The cysteines at positions 96 and 172 are disulfide-linked. A helical membrane pass occupies residues 97 to 119; sequence DIWLSVDITCCTCSILHLSAIAL. 2 residues coordinate serotonin: D103 and C107. Positions 120 to 122 match the DRY motif; important for ligand-induced conformation changes motif; sequence DRY. The Cytoplasmic segment spans residues 120-139; the sequence is DRYRAITDAVEYARKRTPKH. The helical transmembrane segment at 140–159 threads the bilayer; it reads AGIMITIVWIISVFISMPPL. Over 160–178 the chain is Extracellular; it reads FWRHQGTSRDDECIIKHDH. A helical membrane pass occupies residues 179 to 202; it reads IVSTIYSTFGAFYIPLALILILYY. Residues 203-291 are Cytoplasmic-facing; sequence KIYRAAKTLY…KISGTRERKA (89 aa). A helical membrane pass occupies residues 292–315; the sequence is ATTLGLILGAFVICWLPFFVKELV. Topologically, residues 316–327 are extracellular; it reads VNVCDKCKISEE. Residues 328–350 traverse the membrane as a helical segment; sequence MSNFLAWLGYLNSLINPLIYTIF. Residues 343 to 347 carry the NPxxY motif; important for ligand-induced conformation changes and signaling motif; that stretch reads NPLIY. The Cytoplasmic segment spans residues 351-365; sequence NEDFKKAFQKLVRCR.

The protein belongs to the G-protein coupled receptor 1 family.

Its subcellular location is the cell membrane. Functionally, G-protein coupled receptor for 5-hydroxytryptamine (serotonin). Also functions as a receptor for various alkaloids and psychoactive substances. Ligand binding causes a conformation change that triggers signaling via guanine nucleotide-binding proteins (G proteins) and modulates the activity of downstream effectors, such as adenylate cyclase. HTR1F is coupled to G(i)/G(o) G alpha proteins and mediates inhibitory neurotransmission by inhibiting adenylate cyclase activity. The chain is 5-hydroxytryptamine receptor 1F (HTR1F) from Pan troglodytes (Chimpanzee).